Reading from the N-terminus, the 128-residue chain is Lutropin subunit beta (128 aa).

6 cysteine pairs are disulfide-bonded: cysteine 18/cysteine 66, cysteine 32/cysteine 81, cysteine 35/cysteine 119, cysteine 43/cysteine 97, cysteine 47/cysteine 99, and cysteine 102/cysteine 109. N-linked (GlcNAc...) asparagine glycosylation is present at asparagine 22.

Belongs to the glycoprotein hormones subunit beta family. As to quaternary structure, heterodimer of a common alpha chain and a unique beta chain which confers biological specificity to thyrotropin, lutropin, follitropin and gonadotropin.

The protein resides in the secreted. Promotes spermatogenesis and ovulation by stimulating the testes and ovaries to synthesize steroids. The sequence is that of Lutropin subunit beta (LHB) from Struthio camelus (Common ostrich).